A 449-amino-acid polypeptide reads, in one-letter code: Probable D-serine dehydratase (449 aa).

Position 119 is an N6-(pyridoxal phosphate)lysine (lysine 119).

Belongs to the serine/threonine dehydratase family. DsdA subfamily. Pyridoxal 5'-phosphate serves as cofactor.

It catalyses the reaction D-serine = pyruvate + NH4(+). This Pseudomonas putida (strain ATCC 700007 / DSM 6899 / JCM 31910 / BCRC 17059 / LMG 24140 / F1) protein is Probable D-serine dehydratase.